The following is a 129-amino-acid chain: MAKAPIRARKRVRKTVSDGVAHIHASFNNTIVTITDRQGNALGWATAGGSGFRGSRKSTPFAAQVAAERCADAVKEYGIKNLEVMVKGPGPGRESTIRALNAAGFRITNITDVTPIPHNGCRPPKKRRV.

The protein belongs to the universal ribosomal protein uS11 family. As to quaternary structure, part of the 30S ribosomal subunit. Interacts with proteins S7 and S18. Binds to IF-3.

Its function is as follows. Located on the platform of the 30S subunit, it bridges several disparate RNA helices of the 16S rRNA. Forms part of the Shine-Dalgarno cleft in the 70S ribosome. The protein is Small ribosomal subunit protein uS11 of Yersinia enterocolitica serotype O:8 / biotype 1B (strain NCTC 13174 / 8081).